A 625-amino-acid polypeptide reads, in one-letter code: tRNA uridine 5-carboxymethylaminomethyl modification enzyme MnmG (625 aa).

14–19 (GAGHAG) is a binding site for FAD. NAD(+) is bound at residue 273–287 (GPRYCPSIEDKIVRF).

The protein belongs to the MnmG family. In terms of assembly, homodimer. Heterotetramer of two MnmE and two MnmG subunits. It depends on FAD as a cofactor.

The protein resides in the cytoplasm. NAD-binding protein involved in the addition of a carboxymethylaminomethyl (cmnm) group at the wobble position (U34) of certain tRNAs, forming tRNA-cmnm(5)s(2)U34. The sequence is that of tRNA uridine 5-carboxymethylaminomethyl modification enzyme MnmG from Clostridium botulinum (strain Hall / ATCC 3502 / NCTC 13319 / Type A).